A 213-amino-acid chain; its full sequence is Glutathione S-transferase APIC (213 aa).

The region spanning 1–82 (MAIKVHGSPM…YIAHVYADNG (82 aa)) is the GST N-terminal domain. Glutathione-binding positions include serine 11, 12–13 (TA), 40–41 (HK), 53–54 (QV), and 66–67 (ES). The region spanning 89 to 213 (DPKKMPIMSV…WVKGLEKLQK (125 aa)) is the GST C-terminal domain.

This sequence belongs to the GST superfamily. Phi family.

The enzyme catalyses RX + glutathione = an S-substituted glutathione + a halide anion + H(+). Conjugation of reduced glutathione to a wide number of exogenous and endogenous hydrophobic electrophiles. The protein is Glutathione S-transferase APIC of Nicotiana tabacum (Common tobacco).